The chain runs to 274 residues: Diaminopimelate epimerase (274 aa).

Residues Asn13, Gln47, and Asn65 each coordinate substrate. Cys74 serves as the catalytic Proton donor. Residues 75–76, Asn149, Asn182, and 200–201 each bind substrate; these read GN and ER. Cys209 functions as the Proton acceptor in the catalytic mechanism. 210 to 211 contacts substrate; sequence GT.

This sequence belongs to the diaminopimelate epimerase family. Homodimer.

Its subcellular location is the cytoplasm. It catalyses the reaction (2S,6S)-2,6-diaminopimelate = meso-2,6-diaminopimelate. It participates in amino-acid biosynthesis; L-lysine biosynthesis via DAP pathway; DL-2,6-diaminopimelate from LL-2,6-diaminopimelate: step 1/1. Catalyzes the stereoinversion of LL-2,6-diaminopimelate (L,L-DAP) to meso-diaminopimelate (meso-DAP), a precursor of L-lysine and an essential component of the bacterial peptidoglycan. This is Diaminopimelate epimerase from Rhizorhabdus wittichii (strain DSM 6014 / CCUG 31198 / JCM 15750 / NBRC 105917 / EY 4224 / RW1) (Sphingomonas wittichii).